We begin with the raw amino-acid sequence, 244 residues long: Uridylate kinase (244 aa).

Residue 19–22 (KVSG) coordinates ATP. Residues 27-32 (GERGFG) form an involved in allosteric activation by GTP region. Position 61 (G61) interacts with UMP. G62 and R66 together coordinate ATP. UMP is bound by residues D80 and 141–148 (IGSPFFTT). Residues T168, Q169, Y174, and D177 each coordinate ATP.

It belongs to the UMP kinase family. Homohexamer.

It is found in the cytoplasm. The enzyme catalyses UMP + ATP = UDP + ADP. Its pathway is pyrimidine metabolism; CTP biosynthesis via de novo pathway; UDP from UMP (UMPK route): step 1/1. Allosterically activated by GTP. Inhibited by UTP. In terms of biological role, catalyzes the reversible phosphorylation of UMP to UDP. The polypeptide is Uridylate kinase (Anaplasma phagocytophilum (strain HZ)).